Consider the following 103-residue polypeptide: uncharacterized protein (103 aa).

This is an uncharacterized protein from Sulfolobus islandicus filamentous virus (isolate Iceland/Hveragerdi) (SIFV).